Consider the following 404-residue polypeptide: Serine/threonine transporter SstT (404 aa).

A run of 8 helical transmembrane segments spans residues 17-37 (IGIG…LTGF), 39-59 (ILGK…VFAL), 75-95 (MTLI…VAVL), 138-158 (ALAT…GLAL), 179-199 (IVVW…FTTI), 212-232 (FLIL…NPLI), 287-307 (IPLG…VLTL), and 313-333 (FGIP…AVSA).

Belongs to the dicarboxylate/amino acid:cation symporter (DAACS) (TC 2.A.23) family.

Its subcellular location is the cell membrane. The catalysed reaction is L-serine(in) + Na(+)(in) = L-serine(out) + Na(+)(out). It carries out the reaction L-threonine(in) + Na(+)(in) = L-threonine(out) + Na(+)(out). Involved in the import of serine and threonine into the cell, with the concomitant import of sodium (symport system). The sequence is that of Serine/threonine transporter SstT from Streptococcus pyogenes serotype M12 (strain MGAS2096).